We begin with the raw amino-acid sequence, 365 residues long: NAD(P)H-quinone oxidoreductase subunit 1, chloroplastic (365 aa).

Transmembrane regions (helical) follow at residues 27–47 (VWIFVPIFSLVLGIITGVLVI), 98–118 (FSIGPSIAVISILLSYSVIPF), 129–149 (IGIFLWIAISSIAPIGLLMSG), 165–185 (AAQSISYEIPLTLCVLSISLL), 203–223 (FWGWNLWRQPIGFIIFLISSL), 253–273 (FGLFYVASYINLLISSLFVTI), 302–322 (IFGTTIGIFITLAKTYLFLFI), and 345–365 (FLLPISLGNLLLTTSFQLFSL).

Belongs to the complex I subunit 1 family. As to quaternary structure, NDH is composed of at least 16 different subunits, 5 of which are encoded in the nucleus.

Its subcellular location is the plastid. It localises to the chloroplast thylakoid membrane. The catalysed reaction is a plastoquinone + NADH + (n+1) H(+)(in) = a plastoquinol + NAD(+) + n H(+)(out). It catalyses the reaction a plastoquinone + NADPH + (n+1) H(+)(in) = a plastoquinol + NADP(+) + n H(+)(out). In terms of biological role, NDH shuttles electrons from NAD(P)H:plastoquinone, via FMN and iron-sulfur (Fe-S) centers, to quinones in the photosynthetic chain and possibly in a chloroplast respiratory chain. The immediate electron acceptor for the enzyme in this species is believed to be plastoquinone. Couples the redox reaction to proton translocation, and thus conserves the redox energy in a proton gradient. This chain is NAD(P)H-quinone oxidoreductase subunit 1, chloroplastic, found in Arabis hirsuta (Hairy rock-cress).